Here is a 752-residue protein sequence, read N- to C-terminus: Polyribonucleotide nucleotidyltransferase (752 aa).

Residues Asp-519 and Asp-525 each coordinate Mg(2+). In terms of domain architecture, KH spans 585-644 (PRVIAVKIPVDKIGEVIGPKGKMINQIQEDTGADISIEDDGTVYIGATNGPSADAARSAI). Residues 656–728 (GERYLGTVVK…DRGKLSLSPV (73 aa)) form the S1 motif domain. The segment at 727–752 (PVVAEEEGAEGAERAHATEPAEGAEI) is disordered.

It belongs to the polyribonucleotide nucleotidyltransferase family. The cofactor is Mg(2+).

The protein localises to the cytoplasm. It catalyses the reaction RNA(n+1) + phosphate = RNA(n) + a ribonucleoside 5'-diphosphate. Involved in mRNA degradation. Catalyzes the phosphorolysis of single-stranded polyribonucleotides processively in the 3'- to 5'-direction. This Pseudarthrobacter chlorophenolicus (strain ATCC 700700 / DSM 12829 / CIP 107037 / JCM 12360 / KCTC 9906 / NCIMB 13794 / A6) (Arthrobacter chlorophenolicus) protein is Polyribonucleotide nucleotidyltransferase.